The sequence spans 77 residues: uncharacterized protein (77 aa).

Polar residues predominate over residues 1-15 (MNRTSESVEPQQNEK). Disordered regions lie at residues 1–20 (MNRT…AVHW) and 31–52 (TYSN…QRTF). Over residues 33 to 44 (SNEDDEDNEEGD) the composition is skewed to acidic residues.

This is an uncharacterized protein from Schizosaccharomyces pombe (strain 972 / ATCC 24843) (Fission yeast).